Reading from the N-terminus, the 418-residue chain is tRNA-2-methylthio-N(6)-dimethylallyladenosine synthase (418 aa).

One can recognise an MTTase N-terminal domain in the interval 1–118; sequence MNYLIETIGC…ALKIMNLFRT (118 aa). [4Fe-4S] cluster-binding residues include C10, C46, C80, C143, C147, and C150. Positions 129–356 constitute a Radical SAM core domain; it reads IKSKIVRYIT…LKESNKISIE (228 aa). The TRAM domain occupies 359–418; that stretch reads SEMLGSTQQVLAEEIKNGIIKARTKNGRKVFAEGRKEYIGKHINVNIKEAKINSLFGDIV.

This sequence belongs to the methylthiotransferase family. MiaB subfamily. Monomer. It depends on [4Fe-4S] cluster as a cofactor.

It localises to the cytoplasm. It carries out the reaction N(6)-dimethylallyladenosine(37) in tRNA + (sulfur carrier)-SH + AH2 + 2 S-adenosyl-L-methionine = 2-methylsulfanyl-N(6)-dimethylallyladenosine(37) in tRNA + (sulfur carrier)-H + 5'-deoxyadenosine + L-methionine + A + S-adenosyl-L-homocysteine + 2 H(+). Its function is as follows. Catalyzes the methylthiolation of N6-(dimethylallyl)adenosine (i(6)A), leading to the formation of 2-methylthio-N6-(dimethylallyl)adenosine (ms(2)i(6)A) at position 37 in tRNAs that read codons beginning with uridine. The sequence is that of tRNA-2-methylthio-N(6)-dimethylallyladenosine synthase from Endomicrobium trichonymphae.